We begin with the raw amino-acid sequence, 380 residues long: Queuine tRNA-ribosyltransferase (380 aa).

The active-site Proton acceptor is the Asp95. Substrate-binding positions include 95–99, Asp149, Gln192, and Gly219; that span reads DSGGF. The segment at 250-256 is RNA binding; it reads GVGSPDS. Asp269 acts as the Nucleophile in catalysis. Positions 274 to 278 are RNA binding; important for wobble base 34 recognition; that stretch reads TRIGR. Zn(2+) contacts are provided by Cys307, Cys309, Cys312, and His338.

It belongs to the queuine tRNA-ribosyltransferase family. Homodimer. Within each dimer, one monomer is responsible for RNA recognition and catalysis, while the other monomer binds to the replacement base PreQ1. The cofactor is Zn(2+).

It catalyses the reaction 7-aminomethyl-7-carbaguanine + guanosine(34) in tRNA = 7-aminomethyl-7-carbaguanosine(34) in tRNA + guanine. Its pathway is tRNA modification; tRNA-queuosine biosynthesis. Its function is as follows. Catalyzes the base-exchange of a guanine (G) residue with the queuine precursor 7-aminomethyl-7-deazaguanine (PreQ1) at position 34 (anticodon wobble position) in tRNAs with GU(N) anticodons (tRNA-Asp, -Asn, -His and -Tyr). Catalysis occurs through a double-displacement mechanism. The nucleophile active site attacks the C1' of nucleotide 34 to detach the guanine base from the RNA, forming a covalent enzyme-RNA intermediate. The proton acceptor active site deprotonates the incoming PreQ1, allowing a nucleophilic attack on the C1' of the ribose to form the product. After dissociation, two additional enzymatic reactions on the tRNA convert PreQ1 to queuine (Q), resulting in the hypermodified nucleoside queuosine (7-(((4,5-cis-dihydroxy-2-cyclopenten-1-yl)amino)methyl)-7-deazaguanosine). This Geobacillus kaustophilus (strain HTA426) protein is Queuine tRNA-ribosyltransferase.